A 379-amino-acid chain; its full sequence is Cytochrome b (379 aa).

Transmembrane regions (helical) follow at residues 33-53 (FGSL…FLAM), 77-98 (WLIR…YLHI), 113-133 (WNIG…GYVL), and 178-198 (FFAF…LHLL). 2 residues coordinate heme b: His-83 and His-97. His-182 and His-196 together coordinate heme b. A ubiquinone is bound at residue His-201. A run of 4 helical transmembrane segments spans residues 226-246 (YKDL…ALFY), 288-308 (LGGV…PILH), 320-340 (ASQL…WIGG), and 347-367 (YIII…VLNP).

Belongs to the cytochrome b family. In terms of assembly, the cytochrome bc1 complex contains 3 respiratory subunits (MT-CYB, CYC1 and UQCRFS1), 2 core proteins (UQCRC1 and UQCRC2) and probably 6 low-molecular weight proteins. Requires heme b as cofactor.

The protein localises to the mitochondrion inner membrane. Its function is as follows. Component of the ubiquinol-cytochrome c reductase complex (complex III or cytochrome b-c1 complex) that is part of the mitochondrial respiratory chain. The b-c1 complex mediates electron transfer from ubiquinol to cytochrome c. Contributes to the generation of a proton gradient across the mitochondrial membrane that is then used for ATP synthesis. The polypeptide is Cytochrome b (mt-cyb) (Anguilla anguilla (European freshwater eel)).